Here is a 246-residue protein sequence, read N- to C-terminus: Phosphate import ATP-binding protein PstB (246 aa).

One can recognise an ABC transporter domain in the interval 3-241 (AKTTNLNLFY…PKQEKTKAYL (239 aa)). 35-42 (GASGCGKS) serves as a coordination point for ATP.

This sequence belongs to the ABC transporter superfamily. Phosphate importer (TC 3.A.1.7) family. The complex is composed of two ATP-binding proteins (PstB), two transmembrane proteins (PstC and PstA) and a solute-binding protein (PstS).

The protein resides in the cell inner membrane. The enzyme catalyses phosphate(out) + ATP + H2O = ADP + 2 phosphate(in) + H(+). Functionally, part of the ABC transporter complex PstSACB involved in phosphate import. Responsible for energy coupling to the transport system. The polypeptide is Phosphate import ATP-binding protein PstB (Campylobacter jejuni subsp. jejuni serotype O:2 (strain ATCC 700819 / NCTC 11168)).